Reading from the N-terminus, the 200-residue chain is MFSEVEMARDVAICAKHLNGQSPHQPILCRLLQDLIHEKACREHGFYLGITALKSIGNNKNNNIDNENNHQAKILTFPVSFTCRTFLPARGDILQGTVKKVLWNGAFIRSGPLRYAYLSLLKMPHYHYVHSPLSEDEKPHFQKDDLSKIAVGVVVRFQVLAVRFKERPHKRRNDYYVLATLEGNGSFGPISLTGSDEPYM.

It belongs to the eukaryotic RPB7/RPC8 RNA polymerase subunit family.

The protein localises to the nucleus. The chain is DNA-directed RNA polymerase subunit 7-like protein (NRPB7L) from Arabidopsis thaliana (Mouse-ear cress).